Reading from the N-terminus, the 153-residue chain is Prostaglandin E synthase (153 aa).

At 1 to 13 (MPPSGLELMNGQV) the chain is on the lumenal side. A helical transmembrane segment spans residues 14 to 42 (LPAFLLCSALLVIKMYVVAVITGQVRLRK). A glutathione-binding site is contributed by Arg-39. At 43–61 (KAFANPEDAQRHGGLQYCR) the chain is on the cytoplasmic side. The chain crosses the membrane as a helical span at residues 62-91 (NDPDVERCLRAHRNDMETIYPFLFLGFVYS). 74 to 78 (RNDME) serves as a coordination point for glutathione. Residues 92 to 96 (FLGPN) are Lumenal-facing. Residues 97 to 120 (PFVARMHFLVFFLGRMVHTVAYLG) traverse the membrane as a helical segment. His-114 and Tyr-118 together coordinate glutathione. Residues 121 to 124 (KLRA) are Cytoplasmic-facing. Residues 125–153 (PTRSLAYTLAQLPCASMALQIVWEAARHL) traverse the membrane as a helical segment. 127–131 (RSLAY) contributes to the glutathione binding site.

This sequence belongs to the MAPEG family. Homotrimer. Glutathione is required as a cofactor.

Its subcellular location is the membrane. The protein resides in the cytoplasm. It localises to the perinuclear region. It catalyses the reaction prostaglandin H2 = prostaglandin E2. It carries out the reaction 2-glyceryl-prostaglandin H2 = 2-glyceryl-prostaglandin E2. The enzyme catalyses prostaglandin G2 = (15S)-15-hydroperoxy-prostaglandin E2. The catalysed reaction is 1-chloro-2,4-dinitrobenzene + glutathione = 2,4-dinitrophenyl-S-glutathione + chloride + H(+). It catalyses the reaction (5S)-hydroperoxy-(6E,8Z,11Z,14Z)-eicosatetraenoate + 2 glutathione = (5S)-hydroxy-(6E,8Z,11Z,14Z)-eicosatetraenoate + glutathione disulfide + H2O. Its pathway is lipid metabolism; prostaglandin biosynthesis. In terms of biological role, terminal enzyme of the cyclooxygenase (COX)-2-mediated prostaglandin E2 (PGE2) biosynthetic pathway. Catalyzes the glutathione-dependent oxidoreduction of prostaglandin endoperoxide H2 (PGH2) to prostaglandin E2 (PGE2) in response to inflammatory stimuli. Plays a key role in inflammation response, fever and pain. Also catalyzes the oxidoreduction of endocannabinoids into prostaglandin glycerol esters and PGG2 into 15-hydroperoxy-PGE2. In addition, displays low glutathione transferase and glutathione-dependent peroxidase activities, toward 1-chloro-2,4-dinitrobenzene and 5-hydroperoxyicosatetraenoic acid (5-HPETE), respectively. In Bos taurus (Bovine), this protein is Prostaglandin E synthase (PTGES).